Here is a 267-residue protein sequence, read N- to C-terminus: Alkaline ceramidase 3 (267 aa).

Over 1 to 33 (MAPAADREGYWGPTTSTLDWCEENYSVTWYIAE) the chain is Cytoplasmic. The Ca(2+) site is built by Asp19, Trp20, Glu22, Asn24, and Glu33. The chain crosses the membrane as a helical span at residues 34–55 (FWNTVSNLIMIIPPMFGAVQSV). The Lumenal segment spans residues 56 to 61 (RDGLEK). The helical transmembrane segment at 62-82 (RYIASYLALTVVGMGSWCFHM) threads the bilayer. His81 is a Zn(2+) binding site. Residues 83–87 (TLKYE) lie on the Cytoplasmic side of the membrane. Residues 88 to 108 (MQLLDELPMIYSCCIFVYCMF) form a helical membrane-spanning segment. The Lumenal portion of the chain corresponds to 109 to 118 (ECFKIKNSVN). Residues 119–139 (YHLLFTLVLFSLIVTTVYLKV) form a helical membrane-spanning segment. Topologically, residues 140–141 (KE) are cytoplasmic. The helical transmembrane segment at 142 to 162 (PIFHQVMYGMLVFTLVLRSIY) threads the bilayer. Residues 163–173 (IVTWVYPWLRG) lie on the Lumenal side of the membrane. A helical membrane pass occupies residues 174–194 (LGYTSLGIFLLGFLFWNIDNI). Over 195–215 (FCESLRNFRKKVPPIIGITTQ) the chain is Cytoplasmic. Residues 216–236 (FHAWWHILTGLGSYLHILFSL) traverse the membrane as a helical segment. Residues His217 and His221 each contribute to the Zn(2+) site. Residues 237–267 (YTRTLYLRYRPKVKFLFGIWPVILFEPLRKH) are Lumenal-facing.

It belongs to the alkaline ceramidase family. Zn(2+) is required as a cofactor. In terms of tissue distribution, ubiquitously expressed. Highly expressed in placenta. Expressed in erythrocytes.

The protein localises to the endoplasmic reticulum membrane. Its subcellular location is the golgi apparatus membrane. It catalyses the reaction an N-acyl-(4R)-4-hydroxysphinganine + H2O = (4R)-hydroxysphinganine + a fatty acid. The catalysed reaction is N-(5Z,8Z,11Z,14Z-eicosatetraenoyl)-sphing-4-enine + H2O = sphing-4-enine + (5Z,8Z,11Z,14Z)-eicosatetraenoate. The enzyme catalyses N-(5Z,8Z,11Z,14Z-eicosatetraenoyl)-sphinganine + H2O = sphinganine + (5Z,8Z,11Z,14Z)-eicosatetraenoate. It carries out the reaction N-(5Z,8Z,11Z,14Z-eicosatetraenoyl)-(4R)-hydroxysphinganine + H2O = (4R)-hydroxysphinganine + (5Z,8Z,11Z,14Z)-eicosatetraenoate. It catalyses the reaction N-(11Z-eicosenoyl)-sphing-4-enine + H2O = (11Z)-eicosenoate + sphing-4-enine. The catalysed reaction is N-(11Z-eicosenoyl)-sphinganine + H2O = (11Z)-eicosenoate + sphinganine. The enzyme catalyses N-(11Z-eicosenoyl)-(4R)-hydroxysphinganine + H2O = (11Z)-eicosenoate + (4R)-hydroxysphinganine. It carries out the reaction N-(9Z-octadecenoyl)-sphing-4-enine + H2O = sphing-4-enine + (9Z)-octadecenoate. It catalyses the reaction N-(9Z-octadecenoyl)-sphinganine + H2O = sphinganine + (9Z)-octadecenoate. The catalysed reaction is N-(9Z-octadecenoyl)-(4R)-hydroxysphinganine + H2O = (4R)-hydroxysphinganine + (9Z)-octadecenoate. The enzyme catalyses an N-acylsphing-4-enine + H2O = sphing-4-enine + a fatty acid. It carries out the reaction an N-acylsphinganine + H2O = sphinganine + a fatty acid. The protein operates within lipid metabolism; sphingolipid metabolism. Its activity is regulated as follows. Activated by 5 mM Ca(2+) and inhibited by 5 mM Zn(2+). In terms of biological role, endoplasmic reticulum and Golgi ceramidase that catalyzes the hydrolysis of unsaturated long-chain C18:1-, C20:1- and C20:4-ceramides, dihydroceramides and phytoceramides into sphingoid bases like sphingosine and free fatty acids at alkaline pH. Ceramides, sphingosine, and its phosphorylated form sphingosine-1-phosphate are bioactive lipids that mediate cellular signaling pathways regulating several biological processes including cell proliferation, apoptosis and differentiation. Controls the generation of sphingosine in erythrocytes, and thereby sphingosine-1-phosphate in plasma. Through the regulation of ceramides and sphingosine-1-phosphate homeostasis in the brain may play a role in neurons survival and function. By regulating the levels of pro-inflammatory ceramides in immune cells and tissues, may modulate the inflammatory response. The polypeptide is Alkaline ceramidase 3 (ACER3) (Homo sapiens (Human)).